Here is a 106-residue protein sequence, read N- to C-terminus: MSLAARRKVRIRLYGTNPADVEQVAREIVDLAKKMGVQVKGPIPLPTRRLVVTVRRAPSGQGYHTFDHWELRISKRLIDIEASERVLRRLMTIRVPDTVKIELQLI.

The protein belongs to the universal ribosomal protein uS10 family. As to quaternary structure, part of the 30S ribosomal subunit.

Its function is as follows. Involved in the binding of tRNA to the ribosomes. The polypeptide is Small ribosomal subunit protein uS10 (Pyrobaculum islandicum (strain DSM 4184 / JCM 9189 / GEO3)).